Consider the following 421-residue polypeptide: MRVIVLGSGVIGVASAYYLARQGAEVTVLDRQSGPAEETSFGNAGQISPGYSTPWAAPGIPFKAVKWMFQHHAPLAINLDGSMWQLQWMAQMLKNCNPQSYAVNKERMMRVAEYSRDCLRELRKDTGIHYENRAKGTLQLFRKEAQMEAVQRDISVLEECGVSYELLNGNELGRVEPALANAQDKLVGGLHLPNDETGDCYLFTNALAQIAKELGVNFQFNQNVEKLIVEGDQIKGVQVNGKVLTADRYVLAFGSYSRDFLKPLDLQLPVYPVKGYSLTIPIVDPAFAPQSTVLDETYKIAITRFDQRIRVGGMAELSGFNLGLNEDRRATLQMVTQDLFPGGDMAQASFWTGLRPMTPDSTPIIGATRFKNLFLNTGHGTLGWTMACGSGKLISDIVLNHKTDISTDGLSIQRYSHAHAA.

3–17 (VIVLGSGVIGVASAY) contacts FAD.

It belongs to the DadA oxidoreductase family. It depends on FAD as a cofactor.

The enzyme catalyses a D-alpha-amino acid + A + H2O = a 2-oxocarboxylate + AH2 + NH4(+). It functions in the pathway amino-acid degradation; D-alanine degradation; NH(3) and pyruvate from D-alanine: step 1/1. Functionally, oxidative deamination of D-amino acids. This chain is D-amino acid dehydrogenase, found in Acinetobacter baumannii (strain AB307-0294).